The primary structure comprises 255 residues: 5'-nucleotidase SurE (255 aa).

Residues D8, D9, S40, and N93 each coordinate a divalent metal cation.

This sequence belongs to the SurE nucleotidase family. Requires a divalent metal cation as cofactor.

Its subcellular location is the cytoplasm. It carries out the reaction a ribonucleoside 5'-phosphate + H2O = a ribonucleoside + phosphate. In terms of biological role, nucleotidase that shows phosphatase activity on nucleoside 5'-monophosphates. The polypeptide is 5'-nucleotidase SurE (Nitrobacter hamburgensis (strain DSM 10229 / NCIMB 13809 / X14)).